Consider the following 402-residue polypeptide: Alkaline proteinase (402 aa).

A signal peptide spans 1–20; the sequence is MVTLRRLAVLLGAIPAALAA. A propeptide spanning residues 21–120 is cleaved from the precursor; it reads PTTQKREVVP…EQDEGEFSTA (100 aa). Residues 32 to 108 form the Inhibitor I9 domain; it reads KYIVTLKEGA…EVEEDQIWHL (77 aa). The Peptidase S8 domain occupies 128-402; it reads AWGLGTISHR…NRILYNGNGA (275 aa). Catalysis depends on charge relay system residues aspartate 160, histidine 191, and serine 347. Positions 382 to 392 are enriched in polar residues; it reads GRVSNPGSGSP. Residues 382 to 402 form a disordered region; sequence GRVSNPGSGSPNRILYNGNGA.

This sequence belongs to the peptidase S8 family.

This is Alkaline proteinase (ALP) from Hapsidospora chrysogena (Acremonium chrysogenum).